The primary structure comprises 190 residues: Crossover junction endodeoxyribonuclease RuvC (190 aa).

Catalysis depends on residues Asp-8, Glu-67, and Asp-139. Asp-8, Glu-67, and Asp-139 together coordinate Mg(2+).

It belongs to the RuvC family. As to quaternary structure, homodimer which binds Holliday junction (HJ) DNA. The HJ becomes 2-fold symmetrical on binding to RuvC with unstacked arms; it has a different conformation from HJ DNA in complex with RuvA. In the full resolvosome a probable DNA-RuvA(4)-RuvB(12)-RuvC(2) complex forms which resolves the HJ. Mg(2+) is required as a cofactor.

The protein resides in the cytoplasm. It carries out the reaction Endonucleolytic cleavage at a junction such as a reciprocal single-stranded crossover between two homologous DNA duplexes (Holliday junction).. Functionally, the RuvA-RuvB-RuvC complex processes Holliday junction (HJ) DNA during genetic recombination and DNA repair. Endonuclease that resolves HJ intermediates. Cleaves cruciform DNA by making single-stranded nicks across the HJ at symmetrical positions within the homologous arms, yielding a 5'-phosphate and a 3'-hydroxyl group; requires a central core of homology in the junction. The consensus cleavage sequence is 5'-(A/T)TT(C/G)-3'. Cleavage occurs on the 3'-side of the TT dinucleotide at the point of strand exchange. HJ branch migration catalyzed by RuvA-RuvB allows RuvC to scan DNA until it finds its consensus sequence, where it cleaves and resolves the cruciform DNA. The protein is Crossover junction endodeoxyribonuclease RuvC of Pasteurella multocida (strain Pm70).